We begin with the raw amino-acid sequence, 76 residues long: Exodeoxyribonuclease 7 small subunit (76 aa).

Belongs to the XseB family. In terms of assembly, heterooligomer composed of large and small subunits.

Its subcellular location is the cytoplasm. The enzyme catalyses Exonucleolytic cleavage in either 5'- to 3'- or 3'- to 5'-direction to yield nucleoside 5'-phosphates.. Its function is as follows. Bidirectionally degrades single-stranded DNA into large acid-insoluble oligonucleotides, which are then degraded further into small acid-soluble oligonucleotides. The sequence is that of Exodeoxyribonuclease 7 small subunit from Legionella pneumophila subsp. pneumophila (strain Philadelphia 1 / ATCC 33152 / DSM 7513).